A 384-amino-acid chain; its full sequence is Dehydrogenase ALT3 (384 aa).

It belongs to the iron-containing alcohol dehydrogenase family. The cofactor is Fe cation.

Its pathway is mycotoxin biosynthesis. Functionally, dehydrogenase; part of the gene cluster that mediates the biosynthesis of the host-selective toxins (HSTs) AAL-toxins, sphinganine-analog mycotoxins responsible for Alternaria stem canker on tomato by the tomato pathotype. The biosynthesis starts with the polyketide synthase ALT1-catalyzed C-16 carbon chain assembly from one starter acetyl-CoA unit with malonyl-CoA extender units. ALT1 also selectively transfers methyl groups at the first and the third cycle of chain elongation for AAL toxin. The C-16 polyketide chain is released from the enzyme by a nucleophilic attack of a carbanion, which is derived from R-carbon of glycin by decarboxylation, on the carbonyl carbon of polyketide acyl chain. This step is probably catalyzed by a pyridoxal 5'-phosphate-dependent aminoacyl transferase ALT4. The respective functions of the other enzymes encoded by the cluster have still to be elucidated. The sphingosine N-acyltransferase-like protein ALT7 seems not to act as a resistance/self-tolerance factor against the toxin in the toxin biosynthetic gene cluster, contrary to what is expected. The chain is Dehydrogenase ALT3 from Alternaria alternata (Alternaria rot fungus).